Consider the following 195-residue polypeptide: Elongation factor Ts (195 aa).

The interval 81–84 (TDFV) is involved in Mg(2+) ion dislocation from EF-Tu.

The protein belongs to the EF-Ts family.

The protein resides in the cytoplasm. Functionally, associates with the EF-Tu.GDP complex and induces the exchange of GDP to GTP. It remains bound to the aminoacyl-tRNA.EF-Tu.GTP complex up to the GTP hydrolysis stage on the ribosome. The sequence is that of Elongation factor Ts from Rubrobacter xylanophilus (strain DSM 9941 / JCM 11954 / NBRC 16129 / PRD-1).